The chain runs to 101 residues: NADH-quinone oxidoreductase subunit K (101 aa).

3 helical membrane passes run 4–24, 30–50, and 61–81; these read LAHY…GIFL, IIIL…FVAF, and IFVF…LAIL.

The protein belongs to the complex I subunit 4L family. In terms of assembly, NDH-1 is composed of 14 different subunits. Subunits NuoA, H, J, K, L, M, N constitute the membrane sector of the complex.

It localises to the cell inner membrane. The enzyme catalyses a quinone + NADH + 5 H(+)(in) = a quinol + NAD(+) + 4 H(+)(out). Functionally, NDH-1 shuttles electrons from NADH, via FMN and iron-sulfur (Fe-S) centers, to quinones in the respiratory chain. The immediate electron acceptor for the enzyme in this species is believed to be ubiquinone. Couples the redox reaction to proton translocation (for every two electrons transferred, four hydrogen ions are translocated across the cytoplasmic membrane), and thus conserves the redox energy in a proton gradient. The protein is NADH-quinone oxidoreductase subunit K of Paraburkholderia phymatum (strain DSM 17167 / CIP 108236 / LMG 21445 / STM815) (Burkholderia phymatum).